The sequence spans 80 residues: Exodeoxyribonuclease 7 small subunit (80 aa).

The protein belongs to the XseB family. In terms of assembly, heterooligomer composed of large and small subunits.

It is found in the cytoplasm. The enzyme catalyses Exonucleolytic cleavage in either 5'- to 3'- or 3'- to 5'-direction to yield nucleoside 5'-phosphates.. Bidirectionally degrades single-stranded DNA into large acid-insoluble oligonucleotides, which are then degraded further into small acid-soluble oligonucleotides. This is Exodeoxyribonuclease 7 small subunit from Pseudomonas aeruginosa (strain LESB58).